Reading from the N-terminus, the 144-residue chain is Large ribosomal subunit protein uL15 (144 aa).

Positions 1-54 (MRLNTLSPAEGSKKAGKRLGRGIGSGLGKTGGRGHKGQKSRSGGGVRRGFEGGQ) are disordered. Positions 21 to 31 (RGIGSGLGKTG) are enriched in gly residues.

Belongs to the universal ribosomal protein uL15 family. As to quaternary structure, part of the 50S ribosomal subunit.

In terms of biological role, binds to the 23S rRNA. In Klebsiella pneumoniae (strain 342), this protein is Large ribosomal subunit protein uL15.